We begin with the raw amino-acid sequence, 297 residues long: Iron/alpha-ketoglutarate-dependent dioxygenase ausU (297 aa).

Residues H130, D132, and H206 each contribute to the Fe cation site.

It belongs to the PhyH family. Homodimer. Fe cation is required as a cofactor.

It participates in secondary metabolite biosynthesis; terpenoid biosynthesis. Its function is as follows. Iron/alpha-ketoglutarate-dependent dioxygenase; part of the gene cluster that mediates the biosynthesis of calidodehydroaustin, a fungal meroterpenoid. The first step of the pathway is the synthesis of 3,5-dimethylorsellinic acid by the polyketide synthase ausA. 3,5-dimethylorsellinic acid is then prenylated by the polyprenyl transferase ausN. Further epoxidation by the FAD-dependent monooxygenase ausM and cyclization by the probable terpene cyclase ausL lead to the formation of protoaustinoid A. Protoaustinoid A is then oxidized to spiro-lactone preaustinoid A3 by the combined action of the FAD-binding monooxygenases ausB and ausC, and the dioxygenase ausE. Acid-catalyzed keto-rearrangement and ring contraction of the tetraketide portion of preaustinoid A3 by ausJ lead to the formation of preaustinoid A4. The aldo-keto reductase ausK, with the help of ausH, is involved in the next step by transforming preaustinoid A4 into isoaustinone which is in turn hydroxylated by the P450 monooxygenase ausI to form austinolide. The cytochrome P450 monooxygenase ausG modifies austinolide to austinol. Austinol is further acetylated to austin by the O-acetyltransferase ausP, which spontaneously changes to dehydroaustin. The cytochrome P450 monooxygenase ausR then converts dehydroaustin is into 7-dehydrodehydroaustin. The hydroxylation catalyzed by ausR permits the O-acetyltransferase ausQ to add an additional acetyl group to the molecule, leading to the formation of acetoxydehydroaustin. The short chain dehydrogenase ausT catalyzes the reduction of the double bond present between carbon atoms 1 and 2 to convert 7-dehydrodehydroaustin into 1,2-dihydro-7-hydroxydehydroaustin. AusQ catalyzes not only an acetylation reaction but also the addition of the PKS ausV diketide product to 1,2-dihydro-7-hydroxydehydroaustin, forming precalidodehydroaustin. Finally, the iron/alpha-ketoglutarate-dependent dioxygenase converts precalidodehydroaustin into calidodehydroaustin. This Aspergillus calidoustus protein is Iron/alpha-ketoglutarate-dependent dioxygenase ausU.